We begin with the raw amino-acid sequence, 569 residues long: Potassium-transporting ATPase potassium-binding subunit (569 aa).

10 consecutive transmembrane segments (helical) span residues 3-23 (TEILGVALQILLLLVISYPLG), 64-84 (FLKSLLIINVFWFFWGMILLV), 133-153 (FVIMLFQFITAATGMAAMAGI), 179-199 (ILFPMSLIVGFILIIQGTPMG), 255-275 (IVECWSILIIPMALVFALGFY), 281-301 (LGYVIYGVMLFAYLLGVFCNV), 375-395 (FGGVGVGFMNYYAFLIIAVFI), 421-441 (IVSLAHPFVILIFTAISSYVW), 497-517 (LALIISRYLPIVGQVAIAGLL), and 535-555 (VTFGVMTFFVIVIVAALSFFP).

The protein belongs to the KdpA family. In terms of assembly, the system is composed of three essential subunits: KdpA, KdpB and KdpC.

Its subcellular location is the cell inner membrane. Part of the high-affinity ATP-driven potassium transport (or Kdp) system, which catalyzes the hydrolysis of ATP coupled with the electrogenic transport of potassium into the cytoplasm. This subunit binds the periplasmic potassium ions and delivers the ions to the membrane domain of KdpB through an intramembrane tunnel. This chain is Potassium-transporting ATPase potassium-binding subunit, found in Parabacteroides distasonis (strain ATCC 8503 / DSM 20701 / CIP 104284 / JCM 5825 / NCTC 11152).